Reading from the N-terminus, the 860-residue chain is Protein argonaute-2 (860 aa).

At Tyr-2 the chain carries 3'-nitrotyrosine. In terms of domain architecture, PAZ spans 230-349; the sequence is PVIEFVCEVL…LPLEVCNIVA (120 aa). Residues 312–317 form an interaction with guide RNA region; that stretch reads YFKDRH. Ser-388 bears the Phosphoserine mark. Residues 518–819 form the Piwi domain; it reads LVVVILPGKT…VAFRARYHLV (302 aa). The segment at 525-567 is interaction with guide RNA; that stretch reads GKTPVYAEVKRVGDTVLGMATQCVQMKNVQRTTPQTLSNLCLK. Residues 588–591 are interaction with GW182 family members; it reads FQQP. A divalent metal cation is bound at residue Asp-598. The interval 651–661 is interaction with GW182 family members; it reads LIQFYKSTRFK. Asp-670 contributes to the a divalent metal cation binding site. Position 701 is a 4-hydroxyproline (Pro-701). 3 interaction with guide RNA regions span residues 710 to 711, 754 to 762, and 791 to 813; these read KR, HAGIQGTSR, and YVRCTRSVSIPAPAYYAHLVAFR. An a divalent metal cation-binding site is contributed by His-808. Residues Ser-825, Ser-829, Ser-832, and Ser-835 each carry the phosphoserine modification.

Belongs to the argonaute family. Ago subfamily. Interacts with DICER1 through its Piwi domain and with TARBP2 during assembly of the RNA-induced silencing complex (RISC). Together, DICER1, AGO2 and TARBP2 constitute the trimeric RISC loading complex (RLC), or micro-RNA (miRNA) loading complex (miRLC). Within the RLC/miRLC, DICER1 and TARBP2 are required to process precursor miRNAs (pre-miRNAs) to mature miRNAs and then load them onto AGO2. AGO2 bound to the mature miRNA constitutes the minimal RISC and may subsequently dissociate from DICER1 and TARBP2. Note however that the term RISC has also been used to describe the trimeric RLC/miRLC. The formation of RISC complexes containing siRNAs rather than miRNAs appears to occur independently of DICER1. Interacts with AGO1. Also interacts with DDB1, DDX5, DDX6, DDX20, DHX30, DHX36, DDX47, DHX9, ELAVL, FXR1, GEMIN4, HNRNPF, IGF2BP1, ILF3, IMP8, MATR3, PABPC1, PRMT5, P4HA1, P4HB, RBM4, SART3, TNRC6A, TNRC6B, UPF1 and YBX1. Interacts with the P-body components DCP1A and XRN1. Associates with polysomes and messenger ribonucleoproteins (mNRPs). Interacts with RBM4; the interaction is modulated under stress-induced conditions, occurs under both cell proliferation and differentiation conditions and in an RNA- and phosphorylation-independent manner. Interacts with LIMD1, WTIP and AJUBA. Interacts with TRIM71. Interacts with APOBEC3G in an RNA-dependent manner. Interacts with APOBEC3A, APOBEC3C, APOBEC3F and APOBEC3H. Interacts with DICER1, TARBP2, EIF6, MOV10 and RPL7A (60S ribosome subunit); they form a large RNA-induced silencing complex (RISC). Interacts with FMR1. Interacts with ZFP36. Interacts with RC3H1; the interaction is RNA independent. Interacts with ARB2A. Found in a complex composed of AGO2, CHD7 and ARB2A. Interacts with SND1 and SYT11. Interacts with CLNK. Interacts with GARRE1. Interacts with GRB2; this interaction is important for the formation of a ternary complex containing GRB2, AGO2 and DICER1. The cofactor is Mg(2+). Mn(2+) serves as cofactor. Hydroxylated. 4-hydroxylation appears to enhance protein stability but is not required for miRNA-binding or endonuclease activity. Post-translationally, ubiquitinated on surface-exposed lysines by a SCF-like E3 ubiquitin-protein ligase complex containing ZSWIM8 during target-directed microRNA degradation (TDMD), a process that mediates degradation of microRNAs (miRNAs). Ubiquitination by the SCF-like E3 ubiquitin-protein ligase complex containing ZSWIM8 leads to its subsequent degradation, thereby exposing miRNAs for degradation. ZSWIM8 recognizes and binds AGO2 when it is engaged with a TDMD target. In terms of processing, phosphorylation at Ser-388 by AKT3; leads to up-regulate translational repression of microRNA target and down-regulate endonucleolytic cleavage. A phosphorylation cycle of C-terminal serine cluster (Ser-825-Ser-835) regulates the release of target mRNAs. Target-binding leads to phosphorylation of these residues by CSNK1A1, which reduces the affinity of AGO2 for mRNA and enables target release. The ANKRD52-PPP6C phosphatase complex dephosphorylates the residues, which primes AGO2 for binding a new target. Ubiquitous expression in 9.5 day embryos with highest levels in forebrain, heart, limb buds, and branchial arches.

The protein localises to the cytoplasm. It localises to the P-body. Its subcellular location is the nucleus. The enzyme catalyses Endonucleolytic cleavage to 5'-phosphomonoester.. Functionally, required for RNA-mediated gene silencing (RNAi) by the RNA-induced silencing complex (RISC). The 'minimal RISC' appears to include AGO2 bound to a short guide RNA such as a microRNA (miRNA) or short interfering RNA (siRNA). These guide RNAs direct RISC to complementary mRNAs that are targets for RISC-mediated gene silencing. The precise mechanism of gene silencing depends on the degree of complementarity between the miRNA or siRNA and its target. Binding of RISC to a perfectly complementary mRNA generally results in silencing due to endonucleolytic cleavage of the mRNA specifically by AGO2. Binding of RISC to a partially complementary mRNA results in silencing through inhibition of translation, and this is independent of endonuclease activity. May inhibit translation initiation by binding to the 7-methylguanosine cap, thereby preventing the recruitment of the translation initiation factor eIF4-E. May also inhibit translation initiation via interaction with EIF6, which itself binds to the 60S ribosomal subunit and prevents its association with the 40S ribosomal subunit. The inhibition of translational initiation leads to the accumulation of the affected mRNA in cytoplasmic processing bodies (P-bodies), where mRNA degradation may subsequently occur. In some cases RISC-mediated translational repression is also observed for miRNAs that perfectly match the 3' untranslated region (3'-UTR). Can also up-regulate the translation of specific mRNAs under certain growth conditions. Binds to the AU element of the 3'-UTR of the TNF (TNF-alpha) mRNA and up-regulates translation under conditions of serum starvation. Also required for transcriptional gene silencing (TGS), in which short RNAs known as antigene RNAs or agRNAs direct the transcriptional repression of complementary promoter regions. Regulates lymphoid and erythroid development and function, and this is independent of endonuclease activity. This Mus musculus (Mouse) protein is Protein argonaute-2 (Ago2).